The chain runs to 228 residues: Prolactin (228 aa).

An N-terminal signal peptide occupies residues 1–29; the sequence is MCPKGSSVKGSLLLLLLMSSRFLFKAVES. Cysteines 33 and 40 form a disulfide. Ser55, Ser63, and Ser119 each carry phosphoserine. 2 disulfides stabilise this stretch: Cys87–Cys203 and Cys220–Cys228.

This sequence belongs to the somatotropin/prolactin family. In terms of assembly, interacts with PRLR.

It localises to the secreted. Prolactin acts primarily on the mammary gland by promoting lactation. The chain is Prolactin (PRL) from Monodelphis domestica (Gray short-tailed opossum).